A 310-amino-acid polypeptide reads, in one-letter code: MFNHVTVLLKETVDGLDIKPGGTYVDCTLGGGGHSSYLLSQLTEGGRLIAFDQDEIAIQNAKEKFSSYGEQFITVRSNFRYLSEKLQELGITEVDGILFDLGVSSPQLDTPERGFSYHHDAPLDMRMDQDAPLTAYDVVNSWSYEQLVRIFFQYGEEKFSKQIARKIEAYRENKAIETTGELVELIKEGIPAPARRTGGHPAKRVFQAIRIAVNDELKVFEEALESAIEMVKPGGRVSVITFHSLEDRICKTTFKRNSTTPQLPPGLPIIPDEFKPKLKLITRKPILPSDIELEENNRARSAKLRIAEKR.

S-adenosyl-L-methionine-binding positions include 32–34 (GGH), Asp52, Phe79, Asp100, and Gln107.

This sequence belongs to the methyltransferase superfamily. RsmH family.

The protein localises to the cytoplasm. It carries out the reaction cytidine(1402) in 16S rRNA + S-adenosyl-L-methionine = N(4)-methylcytidine(1402) in 16S rRNA + S-adenosyl-L-homocysteine + H(+). Functionally, specifically methylates the N4 position of cytidine in position 1402 (C1402) of 16S rRNA. The protein is Ribosomal RNA small subunit methyltransferase H of Bacillus cereus (strain AH187).